A 190-amino-acid chain; its full sequence is Putative 3-methyladenine DNA glycosylase (190 aa).

It belongs to the DNA glycosylase MPG family.

This Deinococcus radiodurans (strain ATCC 13939 / DSM 20539 / JCM 16871 / CCUG 27074 / LMG 4051 / NBRC 15346 / NCIMB 9279 / VKM B-1422 / R1) protein is Putative 3-methyladenine DNA glycosylase.